The sequence spans 67 residues: Prokaryotic ubiquitin-like protein Pup (67 aa).

The disordered stretch occupies residues 1–26; it reads MATKETGGQKHATRRNQEVEEIEVTT. Residues 23–61 form an ARC ATPase binding region; it reads EVTTETSVRNEKLAEDVDDILDEIDEVLESNAEDFVRQF. The stretch at 27 to 55 forms a coiled coil; the sequence is ETSVRNEKLAEDVDDILDEIDEVLESNAE. Residue Glu-67 forms an Isoglutamyl lysine isopeptide (Glu-Lys) (interchain with K-? in acceptor proteins) linkage.

The protein belongs to the prokaryotic ubiquitin-like protein family. In terms of assembly, strongly interacts with the proteasome-associated ATPase ARC through a hydrophobic interface; the interacting region of Pup lies in its C-terminal half. There is one Pup binding site per ARC hexamer ring.

It participates in protein degradation; proteasomal Pup-dependent pathway. In terms of biological role, protein modifier that is covalently attached to lysine residues of substrate proteins, thereby targeting them for proteasomal degradation. The tagging system is termed pupylation. This is Prokaryotic ubiquitin-like protein Pup from Thermobifida fusca (strain YX).